Here is a 1020-residue protein sequence, read N- to C-terminus: Fanconi-associated nuclease 1 (1020 aa).

Over residues 1–11 (MPSQRKSPDQK) the composition is skewed to basic and acidic residues. Positions 1-24 (MPSQRKSPDQKRPRRSLSTSKTAK) are disordered. Residues 14–22 (RRSLSTSKT) carry the D-box motif. The segment at 41 to 69 (KLACSTCHKMVPRYDLIRHLDESCANNGV) adopts a UBZ4-type zinc-finger fold. Zn(2+) is bound by residues cysteine 44, cysteine 47, histidine 59, and cysteine 64. Residues 173–208 (KNEGLASQCPQTSPSTPGTSLTDNCPEMEDKDEVLN) are disordered. Polar residues predominate over residues 180 to 195 (QCPQTSPSTPGTSLTD). Positions 212-214 (KEN) match the KEN box motif. A compositionally biased stretch (basic and acidic residues) spans 224–242 (ENASEQKVKNNKITGDESQ). Disordered stretches follow at residues 224–252 (ENAS…PALT) and 269–288 (LVSN…ESAR). The span at 269-278 (LVSNTKSSPG) shows a compositional bias: polar residues. Positions 673–737 (SSRAVEVLER…AIRCIREGLA (65 aa)) form a coiled coil. Mn(2+) is bound by residues glutamate 837, aspartate 963, glutamate 978, and valine 979. One can recognise a VRR-NUC domain in the interval 898 to 1010 (AESLRAWVGE…GADVEVCHVV (113 aa)).

Belongs to the FAN1 family. Interacts with FANCD2 (when monoubiquitinated). Interacts with FANCI, MLH1, MLH3 and PMS2. It depends on Mn(2+) as a cofactor. Mg(2+) serves as cofactor. In terms of processing, ubiquitinated and degraded during mitotic exit by the APC/C-Cdh1 complex.

Its subcellular location is the nucleus. It carries out the reaction Hydrolytically removes 5'-nucleotides successively from the 3'-hydroxy termini of 3'-hydroxy-terminated oligonucleotides.. Functionally, nuclease required for the repair of DNA interstrand cross-links (ICL) recruited at sites of DNA damage by monoubiquitinated FANCD2. Specifically involved in repair of ICL-induced DNA breaks by being required for efficient homologous recombination, probably in the resolution of homologous recombination intermediates. Not involved in DNA double-strand breaks resection. Acts as a 5'-3' exonuclease that anchors at a cut end of DNA and cleaves DNA successively at every third nucleotide, allowing to excise an ICL from one strand through flanking incisions. Probably keeps excising with 3'-flap annealing until it reaches and unhooks the ICL. Acts at sites that have a 5'-terminal phosphate anchor at a nick or a 1- or 2-nucleotide flap and is augmented by a 3' flap. Also has endonuclease activity toward 5'-flaps. This chain is Fanconi-associated nuclease 1, found in Mus musculus (Mouse).